A 111-amino-acid polypeptide reads, in one-letter code: Prophage-derived-like uncharacterized protein YozM (111 aa).

The signal sequence occupies residues 1 to 24 (MKKRLIGFLVLVPALIMWGITLIE).

This is Prophage-derived-like uncharacterized protein YozM (yozM) from Bacillus subtilis (strain 168).